Consider the following 159-residue polypeptide: MTDQQNTVADDESAPQFSLQRIYVRDLSFEAPKSPAIFRQQWEPSVGLDLNTRQTALEADFHEVVLTLSVTVKNGDEVAFIAEVQQAGIFLIKNLDEASMSHTLGAFCPNILFPYAREALDSLVTRGSFPALMLAPVNFDALYAQELQRLQSAGENTVQ.

This sequence belongs to the SecB family. In terms of assembly, homotetramer, a dimer of dimers. One homotetramer interacts with 1 SecA dimer.

The protein resides in the cytoplasm. One of the proteins required for the normal export of preproteins out of the cell cytoplasm. It is a molecular chaperone that binds to a subset of precursor proteins, maintaining them in a translocation-competent state. It also specifically binds to its receptor SecA. The chain is Protein-export protein SecB from Pseudomonas fluorescens (strain ATCC BAA-477 / NRRL B-23932 / Pf-5).